The chain runs to 386 residues: Threonine--tRNA ligase editing subunit (386 aa).

Belongs to the class-II aminoacyl-tRNA synthetase family. Archaea-specific ThrRS editing domain subfamily. As to quaternary structure, probably interacts with its catalytic subunit (AC Q97VW8); a subunit fusion (in the order edit-catalytic) is fully functional.

The protein resides in the cytoplasm. Freestanding tRNA editing subunit of threonine--tRNA ligase, the catalytic subunit is AC Q97VW8. Deacylates (edits) mischarged L-seryl-tRNA(Thr) in trans, removing L-serine, has no aminoacylation activity. In vitro when both subunits are present, or if the 2 subunits are fused, L-seryl-tRNA(Thr) is no longer produced. Has no activity on correctly acylated L-seryl-tRNA(Ser) or L-threonyl-tRNA(Thr). Editing is probably catalyzed by the 2'-OH of A76 of tRNA(Thr). The chain is Threonine--tRNA ligase editing subunit from Saccharolobus solfataricus (strain ATCC 35092 / DSM 1617 / JCM 11322 / P2) (Sulfolobus solfataricus).